The sequence spans 100 residues: uncharacterized protein (100 aa).

Residues 78 to 100 form a disordered region; that stretch reads KPYRTESGTSSSNRMMLPPRQHV.

This is an uncharacterized protein from Caenorhabditis elegans.